Reading from the N-terminus, the 262-residue chain is Putative hydro-lyase Mflv_5194 (262 aa).

It belongs to the D-glutamate cyclase family.

This Mycolicibacterium gilvum (strain PYR-GCK) (Mycobacterium gilvum (strain PYR-GCK)) protein is Putative hydro-lyase Mflv_5194.